The following is a 426-amino-acid chain: MKHLTEMVRRHKEGKTNGIYAVCSAHPLVLEAAIRYACANQTPLLIEATSNQVDQFGGYTGMTPADFRGFVCQLAESLNFPQDALILGGDHLGPNRWQNLPAAQAMANADDLIKSYVAAGFKKIHLDCSMSCQDDPVPLTDDIVAERAARLAKVAEETCREHFGEADLVYVIGTEVPVPGGAHETLSELAVTTPDAARATLEAHRHAFEKQGLSAIWPRIIALVVQPGVEFDHTNVIDYQPVKATALSQMVENYETLIFEAHSTDYQTPQSLRQLVIDHFAILKVGPALTFALREALFSLAAIEEELVPAKACSGLRQVLENVMLDRPEYWQSHYHGDGNARRLARGYSYSDRVRYYWPDSQIDDAFAHLVRNLADSPIPLPLISQYLPLQYVKVRSGELQPTPRELIINHIQDILAQYRTACEGQ.

Belongs to the GatZ/KbaZ family. KbaZ subfamily. As to quaternary structure, forms a complex with KbaY.

It participates in carbohydrate metabolism; D-tagatose 6-phosphate degradation; D-glyceraldehyde 3-phosphate and glycerone phosphate from D-tagatose 6-phosphate: step 2/2. Component of the tagatose-1,6-bisphosphate aldolase KbaYZ that is required for full activity and stability of the Y subunit. Could have a chaperone-like function for the proper and stable folding of KbaY. When expressed alone, KbaZ does not show any aldolase activity. The polypeptide is D-tagatose-1,6-bisphosphate aldolase subunit KbaZ (Escherichia fergusonii (strain ATCC 35469 / DSM 13698 / CCUG 18766 / IAM 14443 / JCM 21226 / LMG 7866 / NBRC 102419 / NCTC 12128 / CDC 0568-73)).